Consider the following 193-residue polypeptide: Deoxycytidylate deaminase (193 aa).

A CMP/dCMP-type deaminase domain is found at 1–171 (MKASTVLQIA…DILRNAGIEV (171 aa)). The Zn(2+) site is built by Cys-19, Cys-49, His-94, Glu-102, and His-104. The active-site Proton donor is Glu-106. Zn(2+) contacts are provided by Cys-132 and Cys-135. Tyr-153 lines the substrate pocket.

It belongs to the cytidine and deoxycytidylate deaminase family. In terms of assembly, homohexamer. Zn(2+) is required as a cofactor.

It carries out the reaction dCMP + H2O + H(+) = dUMP + NH4(+). Allosteric enzyme whose activity is greatly influenced by the end products of its metabolic pathway, dCTP and dTTP. Its function is as follows. Supplies the nucleotide substrate for thymidylate synthetase. The protein is Deoxycytidylate deaminase (CD) of Escherichia coli (Bacteriophage T4).